The sequence spans 239 residues: Large ribosomal subunit protein uL2 (239 aa).

Disordered stretches follow at residues methionine 1–proline 20 and proline 203–lysine 239. The span at proline 222 to lysine 239 shows a compositional bias: basic residues.

Belongs to the universal ribosomal protein uL2 family. Part of the 50S ribosomal subunit. Forms a bridge to the 30S subunit in the 70S ribosome.

One of the primary rRNA binding proteins. Required for association of the 30S and 50S subunits to form the 70S ribosome, for tRNA binding and peptide bond formation. It has been suggested to have peptidyltransferase activity; this is somewhat controversial. Makes several contacts with the 16S rRNA in the 70S ribosome. This Pyrococcus horikoshii (strain ATCC 700860 / DSM 12428 / JCM 9974 / NBRC 100139 / OT-3) protein is Large ribosomal subunit protein uL2.